Consider the following 361-residue polypeptide: Protein RecA (361 aa).

Residue 77–84 coordinates ATP; sequence GPESSGKT.

Belongs to the RecA family.

The protein resides in the cytoplasm. Its function is as follows. Can catalyze the hydrolysis of ATP in the presence of single-stranded DNA, the ATP-dependent uptake of single-stranded DNA by duplex DNA, and the ATP-dependent hybridization of homologous single-stranded DNAs. It interacts with LexA causing its activation and leading to its autocatalytic cleavage. The chain is Protein RecA from Sinorhizobium medicae (strain WSM419) (Ensifer medicae).